A 147-amino-acid polypeptide reads, in one-letter code: Large ribosomal subunit protein uL22c (147 aa).

The protein belongs to the universal ribosomal protein uL22 family. Part of the 50S ribosomal subunit.

It is found in the plastid. This protein binds specifically to 23S rRNA. Its function is as follows. The globular domain of the protein is located near the polypeptide exit tunnel on the outside of the subunit, while an extended beta-hairpin is found that lines the wall of the exit tunnel in the center of the 70S ribosome. The chain is Large ribosomal subunit protein uL22c (rpl22) from Cuscuta gronovii (Common dodder).